The primary structure comprises 555 residues: Formate--tetrahydrofolate ligase (555 aa).

64-71 contacts ATP; it reads TKAGIGKT.

Belongs to the formate--tetrahydrofolate ligase family.

The enzyme catalyses (6S)-5,6,7,8-tetrahydrofolate + formate + ATP = (6R)-10-formyltetrahydrofolate + ADP + phosphate. It participates in one-carbon metabolism; tetrahydrofolate interconversion. In Parabacteroides distasonis (strain ATCC 8503 / DSM 20701 / CIP 104284 / JCM 5825 / NCTC 11152), this protein is Formate--tetrahydrofolate ligase.